Reading from the N-terminus, the 366-residue chain is Phospho-N-acetylmuramoyl-pentapeptide-transferase (366 aa).

10 helical membrane passes run 25–45 (AGAAMFTSALIVFLFGPAIIN), 70–90 (GTPTMGGLMILAGILGGSLLW), 93–113 (LSNVYVVAVLMVTLGFGAIGF), 134–154 (LGIEFLIAAIAVFFMMKMALA), 174–194 (FVINLGYFFVLFGAFVIVGAG), 205–225 (GLAIVPVMIAAATFGVIAYLA), 245–265 (LAVIVGAVIGAGLGFLWFNAP), 268–288 (AIFMGDTGSLALGGLIGSIAV), 297–317 (VIVGGLFVMETLSVIIQVFWF), and 343–363 (QVVIRFWIISVGLALLGLATL).

Belongs to the glycosyltransferase 4 family. MraY subfamily. Requires Mg(2+) as cofactor.

The protein localises to the cell inner membrane. The catalysed reaction is UDP-N-acetyl-alpha-D-muramoyl-L-alanyl-gamma-D-glutamyl-meso-2,6-diaminopimeloyl-D-alanyl-D-alanine + di-trans,octa-cis-undecaprenyl phosphate = di-trans,octa-cis-undecaprenyl diphospho-N-acetyl-alpha-D-muramoyl-L-alanyl-D-glutamyl-meso-2,6-diaminopimeloyl-D-alanyl-D-alanine + UMP. It functions in the pathway cell wall biogenesis; peptidoglycan biosynthesis. Its function is as follows. Catalyzes the initial step of the lipid cycle reactions in the biosynthesis of the cell wall peptidoglycan: transfers peptidoglycan precursor phospho-MurNAc-pentapeptide from UDP-MurNAc-pentapeptide onto the lipid carrier undecaprenyl phosphate, yielding undecaprenyl-pyrophosphoryl-MurNAc-pentapeptide, known as lipid I. In Agrobacterium fabrum (strain C58 / ATCC 33970) (Agrobacterium tumefaciens (strain C58)), this protein is Phospho-N-acetylmuramoyl-pentapeptide-transferase.